The following is a 331-amino-acid chain: tRNA-cytidine(32) 2-sulfurtransferase (331 aa).

Residues 1–31 are disordered; that stretch reads MNAPHMNDTTADAATLDATAAPAGRPALTRR. Residues 8–23 show a composition bias toward low complexity; sequence DTTADAATLDATAAPA. The PP-loop motif signature appears at 71 to 76; it reads SGGKDS. The [4Fe-4S] cluster site is built by C146, C149, and C237.

This sequence belongs to the TtcA family. As to quaternary structure, homodimer. Requires Mg(2+) as cofactor. The cofactor is [4Fe-4S] cluster.

Its subcellular location is the cytoplasm. The catalysed reaction is cytidine(32) in tRNA + S-sulfanyl-L-cysteinyl-[cysteine desulfurase] + AH2 + ATP = 2-thiocytidine(32) in tRNA + L-cysteinyl-[cysteine desulfurase] + A + AMP + diphosphate + H(+). Its pathway is tRNA modification. In terms of biological role, catalyzes the ATP-dependent 2-thiolation of cytidine in position 32 of tRNA, to form 2-thiocytidine (s(2)C32). The sulfur atoms are provided by the cysteine/cysteine desulfurase (IscS) system. The protein is tRNA-cytidine(32) 2-sulfurtransferase of Burkholderia lata (strain ATCC 17760 / DSM 23089 / LMG 22485 / NCIMB 9086 / R18194 / 383).